We begin with the raw amino-acid sequence, 247 residues long: tRNA pseudouridine synthase A (247 aa).

The active-site Nucleophile is the aspartate 52. Tyrosine 110 contacts substrate.

It belongs to the tRNA pseudouridine synthase TruA family. In terms of assembly, homodimer.

The enzyme catalyses uridine(38/39/40) in tRNA = pseudouridine(38/39/40) in tRNA. Functionally, formation of pseudouridine at positions 38, 39 and 40 in the anticodon stem and loop of transfer RNAs. This is tRNA pseudouridine synthase A from Geobacter sp. (strain M21).